The primary structure comprises 346 residues: Peroxidase 19 (346 aa).

Residues 1-31 (MHVISLSLSSIFFFLFLTSTILISPVQPTTS) form the signal peptide. 4 cysteine pairs are disulfide-bonded: C51-C134, C84-C89, C140-C342, and C219-C251. Catalysis depends on H82, which acts as the Proton acceptor. The Ca(2+) site is built by D83, V86, G88, D90, and S92. P182 lines the substrate pocket. A glycan (N-linked (GlcNAc...) asparagine) is linked at N185. H212 lines the heme b pocket. Residue T213 participates in Ca(2+) binding. The Ca(2+) site is built by D265, T268, and D273.

Belongs to the peroxidase family. Classical plant (class III) peroxidase subfamily. The cofactor is heme b. Ca(2+) is required as a cofactor.

The protein localises to the secreted. The enzyme catalyses 2 a phenolic donor + H2O2 = 2 a phenolic radical donor + 2 H2O. In terms of biological role, removal of H(2)O(2), oxidation of toxic reductants, biosynthesis and degradation of lignin, suberization, auxin catabolism, response to environmental stresses such as wounding, pathogen attack and oxidative stress. These functions might be dependent on each isozyme/isoform in each plant tissue. This is Peroxidase 19 (PER19) from Arabidopsis thaliana (Mouse-ear cress).